A 273-amino-acid chain; its full sequence is Large ribosomal subunit protein uL2 (273 aa).

Disordered stretches follow at residues 34–54 (LEKK…TRHI) and 223–273 (VAMN…RRRK).

The protein belongs to the universal ribosomal protein uL2 family. Part of the 50S ribosomal subunit. Forms a bridge to the 30S subunit in the 70S ribosome.

One of the primary rRNA binding proteins. Required for association of the 30S and 50S subunits to form the 70S ribosome, for tRNA binding and peptide bond formation. It has been suggested to have peptidyltransferase activity; this is somewhat controversial. Makes several contacts with the 16S rRNA in the 70S ribosome. This Pseudomonas aeruginosa (strain LESB58) protein is Large ribosomal subunit protein uL2.